A 150-amino-acid chain; its full sequence is D-aminoacyl-tRNA deacylase (150 aa).

The short motif at glycine 136–proline 137 is the Gly-cisPro motif, important for rejection of L-amino acids element.

It belongs to the DTD family. As to quaternary structure, homodimer.

The protein localises to the cytoplasm. The catalysed reaction is glycyl-tRNA(Ala) + H2O = tRNA(Ala) + glycine + H(+). The enzyme catalyses a D-aminoacyl-tRNA + H2O = a tRNA + a D-alpha-amino acid + H(+). Functionally, an aminoacyl-tRNA editing enzyme that deacylates mischarged D-aminoacyl-tRNAs. Also deacylates mischarged glycyl-tRNA(Ala), protecting cells against glycine mischarging by AlaRS. Acts via tRNA-based rather than protein-based catalysis; rejects L-amino acids rather than detecting D-amino acids in the active site. By recycling D-aminoacyl-tRNA to D-amino acids and free tRNA molecules, this enzyme counteracts the toxicity associated with the formation of D-aminoacyl-tRNA entities in vivo and helps enforce protein L-homochirality. The chain is D-aminoacyl-tRNA deacylase from Staphylococcus aureus (strain bovine RF122 / ET3-1).